The primary structure comprises 339 residues: 2,3,4,5-tetrahydropyridine-2,6-dicarboxylate N-succinyltransferase (339 aa).

Asp-180 contacts Mg(2+). Residue Glu-213 is the Acyl-anhydride intermediate of the active site. Succinyl-CoA is bound by residues Arg-215, Gly-230, Ser-233, Ala-256, 271–272, Gly-279, and Lys-300; that span reads EA.

Belongs to the type 2 tetrahydrodipicolinate N-succinyltransferase family. In terms of assembly, homotrimer.

The protein localises to the cytoplasm. The enzyme catalyses (S)-2,3,4,5-tetrahydrodipicolinate + succinyl-CoA + H2O = (S)-2-succinylamino-6-oxoheptanedioate + CoA. The protein operates within amino-acid biosynthesis; L-lysine biosynthesis via DAP pathway; LL-2,6-diaminopimelate from (S)-tetrahydrodipicolinate (succinylase route): step 1/3. Functionally, catalyzes the conversion of the cyclic tetrahydrodipicolinate (THDP) into the acyclic N-succinyl-L-2-amino-6-oxopimelate using succinyl-CoA. The polypeptide is 2,3,4,5-tetrahydropyridine-2,6-dicarboxylate N-succinyltransferase (Bifidobacterium longum (strain NCC 2705)).